Consider the following 54-residue polypeptide: Potassium channel toxin alpha-KTx 14.3 (54 aa).

Positions 1–23 (MKIFFAILLILAVCSMAIWTVNG) are cleaved as a signal peptide.

This sequence belongs to the short scorpion toxin superfamily. Potassium channel inhibitor family. Alpha-KTx 14 subfamily. Contains 3 disulfide bridges. In terms of tissue distribution, expressed by the venom gland.

It localises to the secreted. In terms of biological role, potential blocker of potassium channels. In Olivierus martensii (Manchurian scorpion), this protein is Potassium channel toxin alpha-KTx 14.3.